The sequence spans 240 residues: tRNA (guanine-N(1)-)-methyltransferase (240 aa).

S-adenosyl-L-methionine-binding positions include Gly-110 and 129-134 (LGDFVL).

The protein belongs to the RNA methyltransferase TrmD family. Homodimer.

It localises to the cytoplasm. It carries out the reaction guanosine(37) in tRNA + S-adenosyl-L-methionine = N(1)-methylguanosine(37) in tRNA + S-adenosyl-L-homocysteine + H(+). Specifically methylates guanosine-37 in various tRNAs. In Clostridium botulinum (strain 657 / Type Ba4), this protein is tRNA (guanine-N(1)-)-methyltransferase.